The sequence spans 292 residues: 2-(5''-triphosphoribosyl)-3'-dephosphocoenzyme-A synthase (292 aa).

Belongs to the CitG/MdcB family.

It catalyses the reaction 3'-dephospho-CoA + ATP = 2'-(5''-triphospho-alpha-D-ribosyl)-3'-dephospho-CoA + adenine. Functionally, catalyzes the formation of 2-(5''-triphosphoribosyl)-3'-dephosphocoenzyme-A, the precursor of the prosthetic group of the holo-acyl carrier protein (gamma chain) of citrate lyase, from ATP and dephospho-CoA. This is 2-(5''-triphosphoribosyl)-3'-dephosphocoenzyme-A synthase from Escherichia coli (strain ATCC 8739 / DSM 1576 / NBRC 3972 / NCIMB 8545 / WDCM 00012 / Crooks).